We begin with the raw amino-acid sequence, 493 residues long: MNKQASQPRAIYYVVALQIWEYFSFYGMRALLILYLTNQLKYDDNHAYELFSAYCSLVYVTPILGGYLADKVLGNRMAVMLGAFLMAIGHLVLGASEIAPTFLYLSLAIIVCGYGLFKSNISCLLGELYQPEDPRRDGGFSLLYAAGNIGSIVAPIACGYVQEEYSWAMGFALAAIGMLAGLVIFLCGNRHFTHTTGVNKAVLCARNYLLPNWGWLLILLVAAPLLITVLFWKEWSVYALIVATAIGLVVLAKIYRQAQTAKQRKELGLIVTLTLFSMLFWAFAQQGGSSISLYIDRFVNRDILGYSVPTAMFQSVNAFAVMLCGVVLAWLVKESVSGNRTVRIWGKFALGLGLMSAGFCILTLSARWSAAYGHSSMPLMVLGLAVMGFAELFIDPVAMSQITRIDIPGVTGVLTGIYMLLSGAIANYLAGVIADQTSQSAFDASGAVNYAINAYVDVFEQITWGALACVGVVLLIWLYQSFKFKSRALAVES.

Helical transmembrane passes span 14–34, 49–69, 91–111, 138–158, 167–187, 212–232, 235–255, 267–287, 312–332, 344–364, 379–399, 413–433, and 458–478; these read VVAL…LLIL, ELFS…GYLA, LVLG…AIIV, GGFS…PIAC, WAMG…IFLC, NWGW…VLFW, WSVY…AKIY, LGLI…AQQG, MFQS…AWLV, IWGK…ILTL, LMVL…PVAM, VLTG…AGVI, and VFEQ…LIWL.

It belongs to the major facilitator superfamily. Proton-dependent oligopeptide transporter (POT/PTR) (TC 2.A.17) family. DtpD subfamily.

The protein resides in the cell inner membrane. Probable proton-dependent permease that transports dipeptides. The polypeptide is Dipeptide permease D (Salmonella typhimurium (strain 14028s / SGSC 2262)).